We begin with the raw amino-acid sequence, 190 residues long: Elongation factor P (190 aa).

Belongs to the elongation factor P family.

The protein localises to the cytoplasm. The protein operates within protein biosynthesis; polypeptide chain elongation. Functionally, involved in peptide bond synthesis. Stimulates efficient translation and peptide-bond synthesis on native or reconstituted 70S ribosomes in vitro. Probably functions indirectly by altering the affinity of the ribosome for aminoacyl-tRNA, thus increasing their reactivity as acceptors for peptidyl transferase. The protein is Elongation factor P of Amoebophilus asiaticus (strain 5a2).